The primary structure comprises 438 residues: Serine hydroxymethyltransferase (438 aa).

(6S)-5,6,7,8-tetrahydrofolate is bound by residues L135 and G139–L141. K244 carries the N6-(pyridoxal phosphate)lysine modification. Residues G361–T383 form a disordered region.

This sequence belongs to the SHMT family. Homodimer. Pyridoxal 5'-phosphate is required as a cofactor.

The protein resides in the cytoplasm. It carries out the reaction (6R)-5,10-methylene-5,6,7,8-tetrahydrofolate + glycine + H2O = (6S)-5,6,7,8-tetrahydrofolate + L-serine. The protein operates within one-carbon metabolism; tetrahydrofolate interconversion. Its pathway is amino-acid biosynthesis; glycine biosynthesis; glycine from L-serine: step 1/1. In terms of biological role, catalyzes the reversible interconversion of serine and glycine with tetrahydrofolate (THF) serving as the one-carbon carrier. This reaction serves as the major source of one-carbon groups required for the biosynthesis of purines, thymidylate, methionine, and other important biomolecules. Also exhibits THF-independent aldolase activity toward beta-hydroxyamino acids, producing glycine and aldehydes, via a retro-aldol mechanism. The polypeptide is Serine hydroxymethyltransferase (Rhizorhabdus wittichii (strain DSM 6014 / CCUG 31198 / JCM 15750 / NBRC 105917 / EY 4224 / RW1) (Sphingomonas wittichii)).